The primary structure comprises 170 residues: Cathelicidin antimicrobial peptide (170 aa).

The signal sequence occupies residues Met-1–Ala-30. A propeptide spans Gln-31 to Arg-131 (cathelin-like domain (CLD)). 2 cysteine pairs are disulfide-bonded: Cys-86/Cys-97 and Cys-108/Cys-125. The interval Phe-150–Gln-162 is active core.

It belongs to the cathelicidin family. In terms of assembly, monomer, homodimer or homotrimer (in vitro). Oligomerizes as tetra- or hexamer in solution (in vitro). In terms of processing, proteolytically cleaved by proteinase PRTN3 into antibacterial peptide LL-37. Proteolytically cleaved by cathepsin CTSG and neutrophil elastase ELANE. Post-translationally, resistant to proteolytic degradation in solution, and when bound to both zwitterionic (mimicking mammalian membranes) and negatively charged membranes (mimicking bacterial membranes). After secretion onto the skin surface, the CAMP gene product is processed by a serine protease-dependent mechanism into multiple novel antimicrobial peptides distinct from and shorter than cathelicidin LL-37. These peptides show enhanced antimicrobial action, acquiring the ability to kill skin pathogens such as S.aureus, E.coli and C.albicans. These peptides have lost the ability to stimulate CXCL8/IL8 release from keratinocytes. The peptides act synergistically, killing bacteria at lower concentrations when present together, and maintain activity at increased salt condition.

The protein localises to the secreted. It is found in the vesicle. Functionally, antimicrobial protein that is an integral component of the innate immune system. Binds to bacterial lipopolysaccharides (LPS). Acts via neutrophil N-formyl peptide receptors to enhance the release of CXCL2. Postsecretory processing generates multiple cathelicidin antimicrobial peptides with various lengths which act as a topical antimicrobial defense in sweat on skin. The unprocessed precursor form, cathelicidin antimicrobial peptide, inhibits the growth of Gram-negative E.coli and E.aerogenes with efficiencies comparable to that of the mature peptide LL-37 (in vitro). Its function is as follows. Antimicrobial peptide that is an integral component of the innate immune system. Binds to bacterial lipopolysaccharides (LPS). Causes membrane permeabilization by forming transmembrane pores (in vitro). Causes lysis of E.coli. Exhibits antimicrobial activity against Gram-negative bacteria such as P.aeruginosa, S.typhimurium, E.aerogenes, E.coli and P.syringae, Gram-positive bacteria such as L.monocytogenes, S.epidermidis, S.pyogenes and S.aureus, as well as vancomycin-resistant enterococci (in vitro). Exhibits antimicrobial activity against methicillin-resistant S.aureus, P.mirabilis, and C.albicans in low-salt media, but not in media containing 100 mM NaCl (in vitro). Forms chiral supramolecular assemblies with quinolone signal (PQS) molecules of P.aeruginosa, which may lead to interference of bacterial quorum signaling and perturbance of bacterial biofilm formation. May form supramolecular fiber-like assemblies on bacterial membranes. Induces cytokine and chemokine producation as well as TNF/TNFA and CSF2/GMCSF production in normal human keratinocytes. Exhibits hemolytic activity against red blood cells. In terms of biological role, exhibits antimicrobial activity against E.coli and B.megaterium (in vitro). In Nomascus leucogenys (Northern white-cheeked gibbon), this protein is Cathelicidin antimicrobial peptide.